Consider the following 449-residue polypeptide: MSHIKFDYSKVLDKFVAPHEVEYMQSQVTAADELIRKXTGAGSDFLGWLDLPEKYDREEFDRILKAAEQIKSDSDVLVVIGIGGSYLGAKAAIDFLNHHFANLQTKEERKAPQILYAGNSISSTYLADLVEYVADKDFSVNVISKSGTTTEPAIAFRVFKELLVKKYGQEEANKRIYATTDRQKGAVKVEADANGWETFVVPDDIGGRFSVLTAVGLLPIAASGADIKALMEGANAARKDYTSDKISENEAYQYAAVRNILYRKGYATEILVNYEPSLQYFSEWWKQLAGESEGKDQKGIYPTSANFSTDLHSLGQFIQEGTRIMFETVVRVDKPRKNVLIPTLEEDLDGLGYLQGKDVDFVNKKATDGVLLAHTDGDVPNMYVTLPEQDAFTLGYTIYFFELAIALSGYLNAINPFDQPGVEAYKRNMFALLGKPGFEELSKELNARL.

Glu-291 serves as the catalytic Proton donor. Residues His-312 and Lys-426 contribute to the active site.

Belongs to the GPI family.

The protein resides in the cytoplasm. The catalysed reaction is alpha-D-glucose 6-phosphate = beta-D-fructose 6-phosphate. It functions in the pathway carbohydrate biosynthesis; gluconeogenesis. It participates in carbohydrate degradation; glycolysis; D-glyceraldehyde 3-phosphate and glycerone phosphate from D-glucose: step 2/4. Its function is as follows. Catalyzes the reversible isomerization of glucose-6-phosphate to fructose-6-phosphate. The sequence is that of Glucose-6-phosphate isomerase from Streptococcus pneumoniae serotype 19F (strain G54).